The following is a 318-amino-acid chain: Homoserine kinase (318 aa).

ATP is bound at residue 97–107; it reads PIGSGLGSSAC.

The protein belongs to the GHMP kinase family. Homoserine kinase subfamily.

The protein localises to the cytoplasm. The enzyme catalyses L-homoserine + ATP = O-phospho-L-homoserine + ADP + H(+). The protein operates within amino-acid biosynthesis; L-threonine biosynthesis; L-threonine from L-aspartate: step 4/5. Functionally, catalyzes the ATP-dependent phosphorylation of L-homoserine to L-homoserine phosphate. The polypeptide is Homoserine kinase (Photobacterium profundum (strain SS9)).